The primary structure comprises 68 residues: Large ribosomal subunit protein uL29 (68 aa).

It belongs to the universal ribosomal protein uL29 family.

This chain is Large ribosomal subunit protein uL29, found in Chloroflexus aggregans (strain MD-66 / DSM 9485).